Consider the following 368-residue polypeptide: Agmatine deiminase (368 aa).

Cys357 serves as the catalytic Amidino-cysteine intermediate.

This sequence belongs to the agmatine deiminase family. In terms of assembly, homodimer.

It carries out the reaction agmatine + H2O = N-carbamoylputrescine + NH4(+). It participates in amine and polyamine biosynthesis; putrescine biosynthesis via agmatine pathway; N-carbamoylputrescine from agmatine: step 1/1. In terms of biological role, mediates the hydrolysis of agmatine into N-carbamoylputrescine in the arginine decarboxylase (ADC) pathway of putrescine biosynthesis, a basic polyamine. This chain is Agmatine deiminase, found in Pseudomonas fluorescens (strain SBW25).